We begin with the raw amino-acid sequence, 285 residues long: Baculoviral IAP repeat-containing protein 7 (285 aa).

Residues 18–47 (ESRARDSVRGPELSHREDGSGRTQEQDKPH) form a disordered region. The span at 19-47 (SRARDSVRGPELSHREDGSGRTQEQDKPH) shows a compositional bias: basic and acidic residues. The BIR repeat unit spans residues 96–161 (RLASFYDWPS…RWFPRCQFLL (66 aa)). 4 residues coordinate Zn(2+): Cys-130, Cys-133, His-150, and Cys-157. Residues 184–225 (QREEPEDAVSATPSAPAHGSPELLRSRRETQPEDVSEPGAKD) are disordered. The segment at 239-273 (CKVCLDRAVSIVFVPCGHFVCTECAPNLQLCPICR) adopts an RING-type zinc-finger fold.

It belongs to the IAP family. Binds to caspase-9. Interaction with DIABLO/SMAC via the BIR domain disrupts binding to caspase-9 and apoptotic suppressor activity. Interacts with TAB1. In vitro, interacts with caspase-3 and caspase-7 via its BIR domain. In terms of processing, autoubiquitinated and undergoes proteasome-mediated degradation. Post-translationally, the truncated protein (tLivin) not only loses its anti-apoptotic effect but also acquires a pro-apoptotic effect.

Its subcellular location is the nucleus. The protein resides in the cytoplasm. It is found in the golgi apparatus. The catalysed reaction is S-ubiquitinyl-[E2 ubiquitin-conjugating enzyme]-L-cysteine + [acceptor protein]-L-lysine = [E2 ubiquitin-conjugating enzyme]-L-cysteine + N(6)-ubiquitinyl-[acceptor protein]-L-lysine.. In terms of biological role, apoptotic regulator capable of exerting proapoptotic and anti-apoptotic activities and plays crucial roles in apoptosis, cell proliferation, and cell cycle control. Its anti-apoptotic activity is mediated through the inhibition of CASP3, CASP7 and CASP9, as well as by its E3 ubiquitin-protein ligase activity. As it is a weak caspase inhibitor, its anti-apoptotic activity is thought to be due to its ability to ubiquitinate DIABLO/SMAC targeting it for degradation thereby promoting cell survival. May contribute to caspase inhibition, by blocking the ability of DIABLO/SMAC to disrupt XIAP/BIRC4-caspase interactions. Protects against apoptosis induced by TNF or by chemical agents such as adriamycin, etoposide or staurosporine. Suppression of apoptosis is mediated by activation of MAPK8/JNK1, and possibly also of MAPK9/JNK2. This activation depends on TAB1 and MAP3K7/TAK1. In vitro, inhibits CASP3 and proteolytic activation of pro-CASP9. The protein is Baculoviral IAP repeat-containing protein 7 (Birc7) of Mus musculus (Mouse).